We begin with the raw amino-acid sequence, 145 residues long: RNAP inhibitory protein (145 aa).

A C-terminal tail, binds in the RNAP DNA-binding channel region spans residues 110–123 (HIKKLNLNSLAMLS).

Belongs to the viral ORF131/RIP family. Interacts with host RNA polymerase (RNAP) subunits Rpo1N and Rpo2.

The protein localises to the virion. Functionally, plays a role in the inhibition of global transcription by interacting with the RNA polymerase (RNAP) clamp, locking it in a fixed position and inhibiting the formation and/or stability of the pre-initiation complex (PIC). Also overlaps with the transcription factor B binding site; overall RIP probably interferes with DNA loading onto RNAP but does not displace DNA once it is loaded. May play a role in virus particle assembly, possibly by dissociating active RNAP from the virus genome. In Acidianus two-tailed virus (ATV), this protein is RNAP inhibitory protein.